We begin with the raw amino-acid sequence, 495 residues long: Glutamyl-tRNA(Gln) amidotransferase subunit A (495 aa).

Catalysis depends on charge relay system residues Lys79 and Ser159. The active-site Acyl-ester intermediate is the Ser183.

This sequence belongs to the amidase family. GatA subfamily. In terms of assembly, heterotrimer of A, B and C subunits.

It catalyses the reaction L-glutamyl-tRNA(Gln) + L-glutamine + ATP + H2O = L-glutaminyl-tRNA(Gln) + L-glutamate + ADP + phosphate + H(+). In terms of biological role, allows the formation of correctly charged Gln-tRNA(Gln) through the transamidation of misacylated Glu-tRNA(Gln) in organisms which lack glutaminyl-tRNA synthetase. The reaction takes place in the presence of glutamine and ATP through an activated gamma-phospho-Glu-tRNA(Gln). In Gluconobacter oxydans (strain 621H) (Gluconobacter suboxydans), this protein is Glutamyl-tRNA(Gln) amidotransferase subunit A.